The following is an 84-amino-acid chain: Antimicrobial peptide MeuNaTxbeta-2 (84 aa).

An N-terminal signal peptide occupies residues 1-20; it reads MMKTVIVLIVFSLVMIVVKS. Residues 21–83 form the LCN-type CS-alpha/beta domain; sequence DNGYLLDKYT…LWHYETNRCR (63 aa). 4 cysteine pairs are disulfide-bonded: cysteine 32–cysteine 82, cysteine 36–cysteine 57, cysteine 43–cysteine 64, and cysteine 47–cysteine 66.

In terms of tissue distribution, expressed by the venom gland.

It is found in the secreted. Functionally, antimicrobial peptide with activity against both Gram-positive and -negative bacteria. The polypeptide is Antimicrobial peptide MeuNaTxbeta-2 (Mesobuthus eupeus (Lesser Asian scorpion)).